The following is a 95-amino-acid chain: Large ribosomal subunit protein uL23 (95 aa).

The protein belongs to the universal ribosomal protein uL23 family. Contacts protein L29, and trigger factor when it is bound to the ribosome. Part of the 50S ribosomal subunit.

One of the early assembly proteins it binds 23S rRNA. One of the proteins that surrounds the polypeptide exit tunnel on the outside of the ribosome. Forms the main docking site for trigger factor binding to the ribosome. This Geobacillus stearothermophilus (Bacillus stearothermophilus) protein is Large ribosomal subunit protein uL23.